We begin with the raw amino-acid sequence, 130 residues long: Small ribosomal subunit protein uS11 (130 aa).

The protein belongs to the universal ribosomal protein uS11 family. As to quaternary structure, part of the 30S ribosomal subunit. Interacts with proteins S7 and S18. Binds to IF-3.

Its function is as follows. Located on the platform of the 30S subunit, it bridges several disparate RNA helices of the 16S rRNA. Forms part of the Shine-Dalgarno cleft in the 70S ribosome. In Campylobacter jejuni subsp. jejuni serotype O:6 (strain 81116 / NCTC 11828), this protein is Small ribosomal subunit protein uS11.